We begin with the raw amino-acid sequence, 69 residues long: EPDSAADTGTEAACSNYDLKKGCAKIFDPVCGTDNILYSNECLLCFQNLQRKTNVRIKRRGTCQEPSPR.

The Kazal-like domain occupies 8–65 (TGTEAACSNYDLKKGCAKIFDPVCGTDNILYSNECLLCFQNLQRKTNVRIKRRGTCQE). 3 cysteine pairs are disulfide-bonded: Cys14-Cys45, Cys23-Cys42, and Cys31-Cys63.

Its subcellular location is the secreted. This is a trypsin inhibitor, its physiological function is to prevent the trypsin-catalyzed premature activation of zymogens within the pancreas. This chain is Pancreatic secretory trypsin inhibitor (SPINK1), found in Struthio camelus (Common ostrich).